A 938-amino-acid chain; its full sequence is Isoleucine--tRNA ligase (938 aa).

Residues 58–68 (PYANGSIHIGH) carry the 'HIGH' region motif. Glu561 is an L-isoleucyl-5'-AMP binding site. The 'KMSKS' region motif lies at 602–606 (KMSKS). ATP is bound at residue Lys605. Positions 901, 904, 921, and 924 each coordinate Zn(2+).

Belongs to the class-I aminoacyl-tRNA synthetase family. IleS type 1 subfamily. In terms of assembly, monomer. Zn(2+) is required as a cofactor.

It localises to the cytoplasm. The enzyme catalyses tRNA(Ile) + L-isoleucine + ATP = L-isoleucyl-tRNA(Ile) + AMP + diphosphate. Catalyzes the attachment of isoleucine to tRNA(Ile). As IleRS can inadvertently accommodate and process structurally similar amino acids such as valine, to avoid such errors it has two additional distinct tRNA(Ile)-dependent editing activities. One activity is designated as 'pretransfer' editing and involves the hydrolysis of activated Val-AMP. The other activity is designated 'posttransfer' editing and involves deacylation of mischarged Val-tRNA(Ile). The chain is Isoleucine--tRNA ligase from Citrobacter koseri (strain ATCC BAA-895 / CDC 4225-83 / SGSC4696).